Here is a 251-residue protein sequence, read N- to C-terminus: Triosephosphate isomerase (251 aa).

9 to 11 (NWK) is a substrate binding site. His94 acts as the Electrophile in catalysis. Residue Glu166 is the Proton acceptor of the active site. Substrate is bound by residues Gly172, Ser211, and 232–233 (GG).

Belongs to the triosephosphate isomerase family. In terms of assembly, homodimer.

It is found in the cytoplasm. The enzyme catalyses D-glyceraldehyde 3-phosphate = dihydroxyacetone phosphate. It functions in the pathway carbohydrate biosynthesis; gluconeogenesis. It participates in carbohydrate degradation; glycolysis; D-glyceraldehyde 3-phosphate from glycerone phosphate: step 1/1. Its function is as follows. Involved in the gluconeogenesis. Catalyzes stereospecifically the conversion of dihydroxyacetone phosphate (DHAP) to D-glyceraldehyde-3-phosphate (G3P). The chain is Triosephosphate isomerase from Xanthomonas euvesicatoria pv. vesicatoria (strain 85-10) (Xanthomonas campestris pv. vesicatoria).